The following is a 905-amino-acid chain: Microtubule-associated protein 10 (905 aa).

7 disordered regions span residues A30–R51, T199–G235, A329–H362, S434–E458, S547–P586, R721–V772, and K786–L855. Acidic residues predominate over residues E34–E43. Over residues S208–P227 the composition is skewed to low complexity. Residues C443–S453 are compositionally biased toward basic and acidic residues. Residues A567–I579 show a composition bias toward polar residues. Over residues R721–K736 the composition is skewed to basic and acidic residues. Polar residues predominate over residues H737 to G748. The segment covering E790 to S801 has biased composition (low complexity). Residues S830 to L855 are compositionally biased toward polar residues.

In terms of assembly, interacts (via middle region) with microtubules. Expressed in different cell lines (at protein level).

It is found in the cytoplasm. The protein resides in the cytoskeleton. The protein localises to the spindle pole. It localises to the microtubule organizing center. Its subcellular location is the centrosome. It is found in the midbody. In terms of biological role, microtubule-associated protein (MAP) that plays a role in the regulation of cell division; promotes microtubule stability and participates in the organization of the spindle midzone and normal progress of cytokinesis. The sequence is that of Microtubule-associated protein 10 (MAP10) from Homo sapiens (Human).